The sequence spans 106 residues: Pyrimidine/purine nucleoside phosphorylase (106 aa).

Belongs to the nucleoside phosphorylase PpnP family.

The enzyme catalyses a purine D-ribonucleoside + phosphate = a purine nucleobase + alpha-D-ribose 1-phosphate. It carries out the reaction adenosine + phosphate = alpha-D-ribose 1-phosphate + adenine. The catalysed reaction is cytidine + phosphate = cytosine + alpha-D-ribose 1-phosphate. It catalyses the reaction guanosine + phosphate = alpha-D-ribose 1-phosphate + guanine. The enzyme catalyses inosine + phosphate = alpha-D-ribose 1-phosphate + hypoxanthine. It carries out the reaction thymidine + phosphate = 2-deoxy-alpha-D-ribose 1-phosphate + thymine. The catalysed reaction is uridine + phosphate = alpha-D-ribose 1-phosphate + uracil. It catalyses the reaction xanthosine + phosphate = alpha-D-ribose 1-phosphate + xanthine. In terms of biological role, catalyzes the phosphorolysis of diverse nucleosides, yielding D-ribose 1-phosphate and the respective free bases. Can use uridine, adenosine, guanosine, cytidine, thymidine, inosine and xanthosine as substrates. Also catalyzes the reverse reactions. The protein is Pyrimidine/purine nucleoside phosphorylase of Leptospira interrogans serogroup Icterohaemorrhagiae serovar copenhageni (strain Fiocruz L1-130).